Reading from the N-terminus, the 225-residue chain is Single-pass membrane and coiled-coil domain-containing protein 3 (225 aa).

The stretch at 69 to 92 forms a coiled coil; the sequence is IIQAMTKIQKELQKIDEALKDQLE. The chain crosses the membrane as a helical span at residues 155 to 175; the sequence is IGTSLLGSIGVAVLSLGIDMI. Residues 182-209 are a coiled coil; that stretch reads AVERTQLQAAIKSYEKHLEEFKAASAKY.

It localises to the membrane. The chain is Single-pass membrane and coiled-coil domain-containing protein 3 (Smco3) from Mus musculus (Mouse).